Here is a 252-residue protein sequence, read N- to C-terminus: 2-succinyl-6-hydroxy-2,4-cyclohexadiene-1-carboxylate synthase (252 aa).

This sequence belongs to the AB hydrolase superfamily. MenH family. In terms of assembly, monomer.

The catalysed reaction is 5-enolpyruvoyl-6-hydroxy-2-succinyl-cyclohex-3-ene-1-carboxylate = (1R,6R)-6-hydroxy-2-succinyl-cyclohexa-2,4-diene-1-carboxylate + pyruvate. It participates in quinol/quinone metabolism; 1,4-dihydroxy-2-naphthoate biosynthesis; 1,4-dihydroxy-2-naphthoate from chorismate: step 3/7. It functions in the pathway quinol/quinone metabolism; menaquinone biosynthesis. In terms of biological role, catalyzes a proton abstraction reaction that results in 2,5-elimination of pyruvate from 2-succinyl-5-enolpyruvyl-6-hydroxy-3-cyclohexene-1-carboxylate (SEPHCHC) and the formation of 2-succinyl-6-hydroxy-2,4-cyclohexadiene-1-carboxylate (SHCHC). This is 2-succinyl-6-hydroxy-2,4-cyclohexadiene-1-carboxylate synthase from Shigella sonnei (strain Ss046).